The following is a 396-amino-acid chain: Apurinic-apyrimidinic endonuclease (396 aa).

Residues 31-41 show a composition bias toward basic residues; the sequence is KGRGKIQKHIQ. The disordered stretch occupies residues 31-100; it reads KGRGKIQKHI…TSGETIAQKK (70 aa). Over residues 55–70 the composition is skewed to polar residues; it reads NQSPGTTVEETLTEEN. Residues 72–85 are compositionally biased toward basic and acidic residues; sequence STDKEETSKLENKP. Zn(2+) contacts are provided by His-185, His-225, Glu-261, Asp-295, His-298, His-332, Asp-345, His-347, and Glu-377.

The protein belongs to the AP endonuclease 2 family. Zn(2+) is required as a cofactor.

It is found in the nucleus. The chain is Apurinic-apyrimidinic endonuclease (apn-1) from Caenorhabditis elegans.